The chain runs to 84 residues: Small ribosomal subunit protein uS15 (84 aa).

It belongs to the universal ribosomal protein uS15 family. As to quaternary structure, part of the 30S ribosomal subunit. Forms a bridge to the 50S subunit in the 70S ribosome, contacting the 23S rRNA.

In terms of biological role, one of the primary rRNA binding proteins, it binds directly to 16S rRNA where it helps nucleate assembly of the platform of the 30S subunit by binding and bridging several RNA helices of the 16S rRNA. Forms an intersubunit bridge (bridge B4) with the 23S rRNA of the 50S subunit in the ribosome. The polypeptide is Small ribosomal subunit protein uS15 (Thermosipho melanesiensis (strain DSM 12029 / CIP 104789 / BI429)).